A 60-amino-acid chain; its full sequence is RTKRDVCELPFEEGPCFAAIRVYAYNAETGNCEQLTYGGCEGNGNRFATLEDCDNACARY.

A propeptide spanning residues 1–2 (RT) is cleaved from the precursor. The BPTI/Kunitz inhibitor domain maps to 7 to 57 (CELPFEEGPCFAAIRVYAYNAETGNCEQLTYGGCEGNGNRFATLEDCDNAC). Cystine bridges form between cysteine 7/cysteine 57, cysteine 16/cysteine 40, and cysteine 32/cysteine 53.

It belongs to the venom Kunitz-type family. In terms of tissue distribution, expressed by the venom duct.

It localises to the secreted. In Californiconus californicus (California cone), this protein is Kunitz-type serine protease inhibitor conotoxin Cal9.1c.